A 410-amino-acid polypeptide reads, in one-letter code: Translation initiation factor 2 subunit gamma (410 aa).

One can recognise a tr-type G domain in the interval Gln-9–Glu-202. Residues Gly-18–Thr-25 form a G1 region. Residues Asp-21, Thr-25, Gly-46, and Thr-48 each coordinate Mg(2+). Asp-21–Thr-26 serves as a coordination point for GTP. Positions Gly-46–Lys-50 are G2. Cys-61, Cys-64, Cys-73, and Cys-76 together coordinate Zn(2+). A G3 region spans residues Asp-90–Gly-93. GTP contacts are provided by residues Asn-145–Glu-148 and Ser-180–Leu-182. The G4 stretch occupies residues Asn-145–Glu-148. Residues Ser-180–Leu-182 are G5.

The protein belongs to the TRAFAC class translation factor GTPase superfamily. Classic translation factor GTPase family. EIF2G subfamily. In terms of assembly, heterotrimer composed of an alpha, a beta and a gamma chain. Requires Mg(2+) as cofactor.

It carries out the reaction GTP + H2O = GDP + phosphate + H(+). Functionally, eIF-2 functions in the early steps of protein synthesis by forming a ternary complex with GTP and initiator tRNA. The protein is Translation initiation factor 2 subunit gamma of Thermococcus onnurineus (strain NA1).